The following is a 114-amino-acid chain: Large ribosomal subunit protein P2 (114 aa).

A disordered region spans residues 84-114; it reads TDALQAGSKKGETKEGPKEESDEDMGFGLFD. Over residues 92 to 102 the composition is skewed to basic and acidic residues; it reads KKGETKEGPKE.

Belongs to the eukaryotic ribosomal protein P1/P2 family. In terms of assembly, P1 and P2 exist as dimers at the large ribosomal subunit. In terms of processing, phosphorylated.

Its function is as follows. Plays an important role in the elongation step of protein synthesis. The protein is Large ribosomal subunit protein P2 (rpp-2) of Brugia malayi (Filarial nematode worm).